The sequence spans 257 residues: Large ribosomal subunit protein bL28m (257 aa).

Residues 1 to 55 (MPLHRYPVHLWQKLRLRQGICARLPAHFLRSLEEERTPTPVHYKPHGTKFKINPK) constitute a mitochondrion transit peptide.

Belongs to the bacterial ribosomal protein bL28 family. Component of the mitochondrial ribosome large subunit (39S) which comprises a 16S rRNA and about 50 distinct proteins. Interacts with OXA1L.

Its subcellular location is the mitochondrion. This chain is Large ribosomal subunit protein bL28m (Mrpl28), found in Mus musculus (Mouse).